Reading from the N-terminus, the 80-residue chain is Toxin Acra1 (80 aa).

Residues 1-22 (MMKLVLFSIIVILFSLIGSIHG) form the signal peptide. The LCN-type CS-alpha/beta domain maps to 25–80 (VPGNYPLDSSGNKYPCTVLGDNQSCIDVCKKHGVKYGYCYSFKCWCEFLEDKNVSI). Disulfide bonds link cysteine 40–cysteine 63, cysteine 49–cysteine 68, and cysteine 53–cysteine 70.

As to expression, expressed by the venom gland.

It localises to the secreted. Its function is as follows. Probable neurotoxin that inhibits ion channels. Is toxic to mice. Is about 2.8% of the total protein in the venom. The chain is Toxin Acra1 from Androctonus crassicauda (Arabian fat-tailed scorpion).